The chain runs to 339 residues: Glycerol-3-phosphate dehydrogenase [NAD(P)+] (339 aa).

NADPH-binding residues include S11, W12, and K109. Residues K109, G140, and S142 each contribute to the sn-glycerol 3-phosphate site. NADPH is bound at residue A144. K195, D249, S259, R260, and N261 together coordinate sn-glycerol 3-phosphate. The Proton acceptor role is filled by K195. R260 lines the NADPH pocket. NADPH is bound by residues V284 and E286.

It belongs to the NAD-dependent glycerol-3-phosphate dehydrogenase family.

It is found in the cytoplasm. It catalyses the reaction sn-glycerol 3-phosphate + NAD(+) = dihydroxyacetone phosphate + NADH + H(+). The catalysed reaction is sn-glycerol 3-phosphate + NADP(+) = dihydroxyacetone phosphate + NADPH + H(+). The protein operates within membrane lipid metabolism; glycerophospholipid metabolism. Functionally, catalyzes the reduction of the glycolytic intermediate dihydroxyacetone phosphate (DHAP) to sn-glycerol 3-phosphate (G3P), the key precursor for phospholipid synthesis. In Lactobacillus johnsonii (strain CNCM I-12250 / La1 / NCC 533), this protein is Glycerol-3-phosphate dehydrogenase [NAD(P)+].